A 339-amino-acid chain; its full sequence is Transcription initiation factor IIB (339 aa).

A TFIIB-type zinc finger spans residues 39 to 70 (EELICPVCGSKNIIKDYERAEIVCEMCGCVLQ). Positions 43, 46, 62, and 65 each coordinate Zn(2+). 2 consecutive repeat copies span residues 156 to 239 (SELD…SREL) and 250 to 331 (DYVP…ELTE).

This sequence belongs to the TFIIB family.

Stabilizes TBP binding to an archaeal box-A promoter. Also responsible for recruiting RNA polymerase II to the pre-initiation complex (DNA-TBP-TFIIB). This chain is Transcription initiation factor IIB, found in Methanococcus maripaludis (strain C6 / ATCC BAA-1332).